The sequence spans 694 residues: Elongation factor G 1 (694 aa).

The tr-type G domain maps to 5–280 (SRYRNIGIFA…AVVDYLPDPT (276 aa)). Residues 14–21 (AHVDAGKT), 78–82 (DTPGH), and 132–135 (NKLD) contribute to the GTP site.

This sequence belongs to the TRAFAC class translation factor GTPase superfamily. Classic translation factor GTPase family. EF-G/EF-2 subfamily.

It is found in the cytoplasm. Catalyzes the GTP-dependent ribosomal translocation step during translation elongation. During this step, the ribosome changes from the pre-translocational (PRE) to the post-translocational (POST) state as the newly formed A-site-bound peptidyl-tRNA and P-site-bound deacylated tRNA move to the P and E sites, respectively. Catalyzes the coordinated movement of the two tRNA molecules, the mRNA and conformational changes in the ribosome. This Methylococcus capsulatus (strain ATCC 33009 / NCIMB 11132 / Bath) protein is Elongation factor G 1.